The chain runs to 331 residues: Cathepsin S (331 aa).

The N-terminal stretch at 1 to 16 (MKRLVCVLLVCSSAVA) is a signal peptide. The propeptide at 17–114 (QLHKDPTLDH…ITYKSNPNRI (98 aa)) is activation peptide. An N-linked (GlcNAc...) asparagine glycan is attached at Asn-104. Intrachain disulfides connect Cys-126–Cys-224, Cys-136–Cys-180, Cys-170–Cys-213, and Cys-272–Cys-320. The active site involves Cys-139. Active-site residues include His-278 and Asn-298.

This sequence belongs to the peptidase C1 family. Monomer.

Its subcellular location is the lysosome. The protein localises to the secreted. It localises to the cytoplasmic vesicle. It is found in the phagosome. The catalysed reaction is Similar to cathepsin L, but with much less activity on Z-Phe-Arg-|-NHMec, and more activity on the Z-Val-Val-Arg-|-Xaa compound.. Its function is as follows. Thiol protease. Key protease responsible for the removal of the invariant chain from MHC class II molecules and MHC class II antigen presentation. The bond-specificity of this proteinase is in part similar to the specificities of cathepsin L. This chain is Cathepsin S (CTSS), found in Homo sapiens (Human).